The primary structure comprises 471 residues: MSYIYLFITAAAVTGALGSSPSYNGLGLTPQMGWDNWNTFACDVSEQLLLNTADRISEIGLKDLGYKYVILDDCWSSGRNSNGTLVADKNKFPNGMDHVARHLHNNNFLFGMYSSAGEYTCAGYPGSLGHEQEDAEFFARNGVDYLKYDNCYNKGKFGTPETSYKRYKAMSDALNKTGRPIFYSLCNWGQDLTFYWGSDIANSWRMSGDIYPEFDRPDSRCPCDGDQYDCSYAGFHCSIMNILNKAAPMGQNAGIGGWNDLDNLEVGVGNLTDDEEKAHFSMWAMVKSPLIIGADVNHLKESSYSIYSQASVIAINQDPKGVPATRVWRHYVSQTDKYGKGEIQLWSCPLDNGDQVIALLNGSNKKRPMNASLEDIFFDSYLGSEELSSSWDIYDLWANRIDNTIASNILKNNKVTNSSLYNATELSYKEGLSKNDTRLFGVQIGTVSPGGLLNTTVPAHGVALYRLRRSR.

The signal sequence occupies residues 1-18 (MSYIYLFITAAAVTGALG). The cysteines at positions 42 and 74 are disulfide-linked. The substrate site is built by D72 and D73. Residue N82 is glycosylated (N-linked (GlcNAc...) asparagine). Residues C121 and C151 are joined by a disulfide bond. K147 contacts substrate. The active-site Nucleophile is D149. N-linked (GlcNAc...) asparagine glycosylation occurs at N175. Position 205 (R205) interacts with substrate. The active-site Proton donor is the D209. Intrachain disulfides connect C221–C237 and C223–C230. Q251 serves as a coordination point for substrate. Residues N270, N361, N370, N417, N422, N435, and N454 are each glycosylated (N-linked (GlcNAc...) asparagine).

The protein belongs to the glycosyl hydrolase 27 family. In terms of assembly, homotetramer.

Its subcellular location is the secreted. It carries out the reaction Hydrolysis of terminal, non-reducing alpha-D-galactose residues in alpha-D-galactosides, including galactose oligosaccharides, galactomannans and galactolipids.. In Saccharomyces mikatae (Yeast), this protein is Alpha-galactosidase (MEL).